Reading from the N-terminus, the 219-residue chain is HTH-type transcriptional activator FasR (219 aa).

The interval 1–30 (MSDLANTAERRGEKRPAGGNRRGNRLPRDE) is disordered. Residues 29–89 (DERRGQLLIA…AVLQRHVDNL (61 aa)) enclose the HTH tetR-type domain. The H-T-H motif DNA-binding region spans 52–71 (GMDEIADRAGVSKPVLYQHF).

Homodimer.

Its activity is regulated as follows. FasR:DNA binding is regulated by long-chain acyl-CoAs (C14- to C26-CoA), which act as effector molecules that modulate the affinity of FasR for its DNA binding sequences and therefore modulate the expression of the essential fas-acpS operon. Transcriptional activator that plays a central role in sensing mycobacterial long-chain fatty acids and regulating lipid biosynthesis. Activates the expression of the genes encoding the fatty acid synthase (fas) and the 4-phosphopantetheinyl transferase (acpS), whose products are involved in the fatty acid and mycolic acid biosynthesis. Specifically binds to three conserved operator sequences present in the fas-acpS promoter region. Essential for M.smegmatis viability. The chain is HTH-type transcriptional activator FasR from Mycolicibacterium smegmatis (strain ATCC 700084 / mc(2)155) (Mycobacterium smegmatis).